We begin with the raw amino-acid sequence, 80 residues long: Iota-conotoxin-like r11c (80 aa).

Residues 1 to 19 form the signal peptide; the sequence is MKLCLTFLLVLMILASVTG. Residues 20 to 35 constitute a propeptide that is removed on maturation; the sequence is EKSSKHTLSRAARVKN. 4-hydroxyproline; partial is present on residues P38 and P47. 4 disulfides stabilise this stretch: C41–C55, C48–C58, C54–C63, and C57–C72. At P65 the chain carries 4-hydroxyproline. A D-leucine modification is found at L78. Residue R80 is a propeptide, removed by a carboxypeptidase.

Post-translationally, the natural D-Leu form of the peptide is more potent than the synthetic L-Leu form. Expressed by the venom duct.

Its subcellular location is the secreted. Functionally, iota-conotoxins bind to voltage-gated sodium channels (Nav) and act as agonists by shifting the voltage-dependence of activation to more hyperpolarized levels. Causes circular motion, convulsions, copious urination, rigid paralysis and death upon intracranial injection into mice. Causes unbalanced swimming, swimming in diagonal and vertical motion and death, when injected intraperitoneally into goldfish. L-Leu and D-Leu forms are active on both nerve and muscle. This chain is Iota-conotoxin-like r11c, found in Conus radiatus (Rayed cone).